Consider the following 606-residue polypeptide: Peptide-N(4)-(N-acetyl-beta-glucosaminyl)asparagine amidase (606 aa).

The 107-residue stretch at 2 to 108 (PVTEVGSLPE…IAEKIRQHYS (107 aa)) folds into the Thioredoxin domain. Zn(2+)-binding residues include Cys191, Cys194, Cys225, and Cys228. Residue Cys251 is the Nucleophile of the active site. Catalysis depends on residues His278 and Asp295. In terms of domain architecture, PAW spans 404–606 (DLGGRITGSE…SFSVKIWMKN (203 aa)).

Belongs to the transglutaminase-like superfamily. PNGase family. Zn(2+) is required as a cofactor.

The protein localises to the cytoplasm. The protein resides in the endoplasmic reticulum. The enzyme catalyses Hydrolysis of an N(4)-(acetyl-beta-D-glucosaminyl)asparagine residue in which the glucosamine residue may be further glycosylated, to yield a (substituted) N-acetyl-beta-D-glucosaminylamine and a peptide containing an aspartate residue.. Inhibited by Zn(2+) and z-VAD-fmk (caspase inhibitor) but unaffected by EDTA. Specifically deglycosylates the denatured form of N-linked glycoproteins in the cytoplasm and assists their proteasome-mediated degradation. Cleaves the beta-aspartyl-glucosamine (GlcNAc) of the glycan and the amide side chain of Asn, converting Asn to Asp. Prefers proteins containing high-mannose over those bearing complex type oligosaccharides. Can recognize misfolded proteins in the endoplasmic reticulum that are exported to the cytosol to be destroyed and deglycosylate them, while it has no activity toward native proteins. Deglycosylation is a prerequisite for subsequent proteasome-mediated degradation of some, but not all, misfolded glycoproteins. Also displays oxidoreductase (thioredoxin) activity. Involved in regulating the expression of proteasomal subunits such as rpt-3 in order to confer resistance to proteasomal dysfunction. This chain is Peptide-N(4)-(N-acetyl-beta-glucosaminyl)asparagine amidase (png-1), found in Caenorhabditis elegans.